The sequence spans 194 residues: ATP-dependent Clp protease proteolytic subunit (194 aa).

Serine 97 serves as the catalytic Nucleophile. Residue histidine 122 is part of the active site.

Belongs to the peptidase S14 family. As to quaternary structure, fourteen ClpP subunits assemble into 2 heptameric rings which stack back to back to give a disk-like structure with a central cavity, resembling the structure of eukaryotic proteasomes.

The protein localises to the cytoplasm. It catalyses the reaction Hydrolysis of proteins to small peptides in the presence of ATP and magnesium. alpha-casein is the usual test substrate. In the absence of ATP, only oligopeptides shorter than five residues are hydrolyzed (such as succinyl-Leu-Tyr-|-NHMec, and Leu-Tyr-Leu-|-Tyr-Trp, in which cleavage of the -Tyr-|-Leu- and -Tyr-|-Trp bonds also occurs).. Functionally, cleaves peptides in various proteins in a process that requires ATP hydrolysis. Has a chymotrypsin-like activity. Plays a major role in the degradation of misfolded proteins. This chain is ATP-dependent Clp protease proteolytic subunit, found in Lactobacillus delbrueckii subsp. bulgaricus (strain ATCC BAA-365 / Lb-18).